Reading from the N-terminus, the 237-residue chain is 7-cyano-7-deazaguanine synthase (237 aa).

ATP is bound at residue 14–24 (FSGGQDSATCL). Cys202, Cys217, Cys220, and Cys223 together coordinate Zn(2+).

This sequence belongs to the QueC family. Requires Zn(2+) as cofactor.

The catalysed reaction is 7-carboxy-7-deazaguanine + NH4(+) + ATP = 7-cyano-7-deazaguanine + ADP + phosphate + H2O + H(+). It functions in the pathway purine metabolism; 7-cyano-7-deazaguanine biosynthesis. Functionally, catalyzes the ATP-dependent conversion of 7-carboxy-7-deazaguanine (CDG) to 7-cyano-7-deazaguanine (preQ(0)). This is 7-cyano-7-deazaguanine synthase from Rhodopseudomonas palustris (strain ATCC BAA-98 / CGA009).